The sequence spans 229 residues: Urease accessory protein UreF (229 aa).

The protein belongs to the UreF family. In terms of assembly, ureD, UreF and UreG form a complex that acts as a GTP-hydrolysis-dependent molecular chaperone, activating the urease apoprotein by helping to assemble the nickel containing metallocenter of UreC. The UreE protein probably delivers the nickel.

It is found in the cytoplasm. Required for maturation of urease via the functional incorporation of the urease nickel metallocenter. The sequence is that of Urease accessory protein UreF from Alcanivorax borkumensis (strain ATCC 700651 / DSM 11573 / NCIMB 13689 / SK2).